The primary structure comprises 753 residues: Protein transport protein SEC23-1 (753 aa).

Zn(2+) is bound by residues Cys-56, Cys-61, Cys-80, and Cys-83.

The protein belongs to the SEC23/SEC24 family. SEC23 subfamily. As to quaternary structure, the COPII coat is composed of at least 5 proteins: the SEC23/24 complex, the SEC13/31 complex, and the protein SAR1.

Its subcellular location is the cytoplasm. The protein resides in the cytoplasmic vesicle. It localises to the COPII-coated vesicle membrane. The protein localises to the endoplasmic reticulum membrane. It is found in the golgi apparatus membrane. Its function is as follows. Component of the coat protein complex II (COPII) which promotes the formation of transport vesicles from the endoplasmic reticulum (ER). The coat has two main functions, the physical deformation of the endoplasmic reticulum membrane into vesicles and the selection of cargo molecules. The protein is Protein transport protein SEC23-1 (SEC231) of Candida glabrata (strain ATCC 2001 / BCRC 20586 / JCM 3761 / NBRC 0622 / NRRL Y-65 / CBS 138) (Yeast).